The sequence spans 1742 residues: NACHT and WD repeat domain-containing protein 2 (1742 aa).

LRR repeat units lie at residues 386 to 410 (FYEY…GHIN), 677 to 698 (LEDV…TRPS), 724 to 747 (VKNV…LYLQ), 883 to 906 (YSQE…VIAF), and 925 to 953 (LPKL…SSMD). In terms of domain architecture, NACHT spans 410 to 737 (NPLVVYGGPC…TLLVWANRHL (328 aa)). 11 WD repeats span residues 963-1004 (LASS…LLRQ), 1007-1046 (TAQS…LLSE), 1140-1179 (FSGG…NPQL), 1229-1271 (RHNE…ASLQ), 1272-1311 (ESSG…AMSN), 1314-1353 (KTGK…IEAV), 1355-1394 (KHEG…NLFR), 1396-1434 (NGQR…RVCN), 1476-1516 (EDGI…ICRR), 1522-1561 (NFLK…LRVV), and 1614-1653 (SLYK…DAAL). The tract at residues 1702–1721 (PITVSDSSESNEATPSKKHN) is disordered. Residues 1703 to 1715 (ITVSDSSESNEAT) are compositionally biased toward polar residues.

The polypeptide is NACHT and WD repeat domain-containing protein 2 (Nwd2) (Mus musculus (Mouse)).